The primary structure comprises 267 residues: Heme-containing CO-sensing transcriptional regulator RcoM 1 (267 aa).

The PAS domain occupies 15-86 (RAETFQHKLE…KSRDKLRFLL (72 aa)). Residues H74 and M104 each coordinate heme. The HTH LytTR-type domain occupies 161-266 (IPVYRKNRVI…TAQLKELLGV (106 aa)).

Requires heme as cofactor.

It is found in the cytoplasm. Functionally, one-component, b-type heme-containing aerobic sensor and transcriptional regulator that responds to CO by activating the expression of the oxidation operon cox. This is Heme-containing CO-sensing transcriptional regulator RcoM 1 (rcoM1) from Paraburkholderia xenovorans (strain LB400).